A 1178-amino-acid chain; its full sequence is MFELNNFDALQIGLASPEQIREWSRGEVKKPETINYRTLKPERDGLFCERIFGPIKDWECHCGKYKRVRYKGIVCDRCGVEVTKSKVRRERMAHIELAAPVSHIWYFKGIPSRMGLILDMSPRALEKVLYFASYIVIDPKETSLLKKQLLNEKEYREACDKYGEESFVAGMGAEAIKTLLSEIDLERTAAELKEELKQSTGQKKVRIIRRLEVVESFKSSGNKPEWMVVDVIPVIPPDLRPMVQLDGGRFATSDLNDLYRRVINRNNRLKKLLDLGAPDIIVRNEKRMLQEAVDALIDNGRRGRPVTGPGNRPLKSLSDMLKGKQGRFRQNLLGKRVDYSGRSVIVVGPELKMYQCGLPKEMALELFKPFVMKKLVEDGVAHNIKSAKRMVERVMPQVWDVLEEVIADHPVLLNRAPTLHRLGIQAFQPVLVEGRAIKLHPLVCTAYNADFDGDQMAVHVPLSVEAQAEARFLMLAAGNIMKPSDGRPVCVPTQDMVLGSYYLTMDKDGAKGEGKYFASFDEVIMAYQLKEVDIHAKINVKVTKEIDGELKSGIIKTTPGFIIFNECIPQDLGFVNRENPEEMFNLEIDFLITKKSLGKIIDKCYLKHGPTKTSIMLDNIKATGYHYSSIGAVTVAASDMIVPQKKYELLKEADETVDKIEKMYRRGLISEDERYERVIEKWTETTEEVADTLMNSLDKFNPIFMMADSGARGSKSQIKQLAGMRGLMASPSGKIIELPIRASFREGLDVLEYFISTHGARKGNADTALKTADSGYLTRRLVDVSQDVIVREHDCGTQNGIYVEEIKEGSEVVEQLAERLTGRYTAEDVFHPETGELLAAKDTYMDPILAEKIADTGIQKVKIRSVFTCDSKVGVCTKCYGMNMATSYKINIGEAVGIVAAQSIGEPGTQLTMRTFHTGGVAGADITQGLPRVEELFEARKPKGLAIVSEVAGTVRIEETKKKRTVYVVTDSGEEYSYDIPFGSRLKVKDGIAIGAGDEITEGSVNPHDIMSIKGVDGAREYLLSEVQKVYRLQGVDINDKHLEVVVRQMTRKIKVTEQGDTNLLPGVMIDMFDFRAENERVESFGGEKAQGDIVLLGITKAALATDSFLSAASFQETTRVLTDAAIKGKIDPLVGLKENVIIGKLIPAGTGMMKYRSLKLNTENSNQETETIIEIEE.

Zn(2+)-binding residues include cysteine 60, cysteine 62, cysteine 75, and cysteine 78. Mg(2+)-binding residues include aspartate 450, aspartate 452, and aspartate 454. Positions 795, 869, 876, and 879 each coordinate Zn(2+).

It belongs to the RNA polymerase beta' chain family. In terms of assembly, the RNAP catalytic core consists of 2 alpha, 1 beta, 1 beta' and 1 omega subunit. When a sigma factor is associated with the core the holoenzyme is formed, which can initiate transcription. Requires Mg(2+) as cofactor. Zn(2+) is required as a cofactor.

It catalyses the reaction RNA(n) + a ribonucleoside 5'-triphosphate = RNA(n+1) + diphosphate. Functionally, DNA-dependent RNA polymerase catalyzes the transcription of DNA into RNA using the four ribonucleoside triphosphates as substrates. The protein is DNA-directed RNA polymerase subunit beta' of Clostridium perfringens (strain ATCC 13124 / DSM 756 / JCM 1290 / NCIMB 6125 / NCTC 8237 / Type A).